A 509-amino-acid polypeptide reads, in one-letter code: ATP synthase subunit alpha (509 aa).

Position 171–178 (G171–T178) interacts with ATP.

Belongs to the ATPase alpha/beta chains family. In terms of assembly, F-type ATPases have 2 components, CF(1) - the catalytic core - and CF(0) - the membrane proton channel. CF(1) has five subunits: alpha(3), beta(3), gamma(1), delta(1), epsilon(1). CF(0) has three main subunits: a(1), b(2) and c(9-12). The alpha and beta chains form an alternating ring which encloses part of the gamma chain. CF(1) is attached to CF(0) by a central stalk formed by the gamma and epsilon chains, while a peripheral stalk is formed by the delta and b chains.

The protein resides in the cell inner membrane. The catalysed reaction is ATP + H2O + 4 H(+)(in) = ADP + phosphate + 5 H(+)(out). Produces ATP from ADP in the presence of a proton gradient across the membrane. The alpha chain is a regulatory subunit. The polypeptide is ATP synthase subunit alpha (Neorickettsia sennetsu (strain ATCC VR-367 / Miyayama) (Ehrlichia sennetsu)).